The sequence spans 296 residues: tRNA dimethylallyltransferase (296 aa).

2–9 (GPTASGKT) is an ATP binding site. Residue 4–9 (TASGKT) coordinates substrate. 3 interaction with substrate tRNA regions span residues 27 to 30 (DSAL), 151 to 155 (QRLSR), and 232 to 237 (RCVGYR).

It belongs to the IPP transferase family. Monomer. Mg(2+) serves as cofactor.

The catalysed reaction is adenosine(37) in tRNA + dimethylallyl diphosphate = N(6)-dimethylallyladenosine(37) in tRNA + diphosphate. Functionally, catalyzes the transfer of a dimethylallyl group onto the adenine at position 37 in tRNAs that read codons beginning with uridine, leading to the formation of N6-(dimethylallyl)adenosine (i(6)A). The polypeptide is tRNA dimethylallyltransferase (Shewanella woodyi (strain ATCC 51908 / MS32)).